Reading from the N-terminus, the 650-residue chain is Acetyl-coenzyme A synthetase (650 aa).

Residues 189-192 (RGGK), Thr-307, and Asn-331 each bind CoA. ATP is bound by residues 383-385 (GEP), 407-412 (DTWWQT), Asp-496, and Arg-511. CoA is bound at residue Ser-519. Residue Arg-522 coordinates ATP. The Mg(2+) site is built by Val-533, His-535, and Val-538. CoA is bound at residue Arg-580. Lys-605 bears the N6-acetyllysine mark.

It belongs to the ATP-dependent AMP-binding enzyme family. The cofactor is Mg(2+). Post-translationally, acetylated. Deacetylation by the SIR2-homolog deacetylase activates the enzyme.

It carries out the reaction acetate + ATP + CoA = acetyl-CoA + AMP + diphosphate. Functionally, catalyzes the conversion of acetate into acetyl-CoA (AcCoA), an essential intermediate at the junction of anabolic and catabolic pathways. AcsA undergoes a two-step reaction. In the first half reaction, AcsA combines acetate with ATP to form acetyl-adenylate (AcAMP) intermediate. In the second half reaction, it can then transfer the acetyl group from AcAMP to the sulfhydryl group of CoA, forming the product AcCoA. This chain is Acetyl-coenzyme A synthetase, found in Syntrophobacter fumaroxidans (strain DSM 10017 / MPOB).